Reading from the N-terminus, the 332-residue chain is Small ribosomal subunit protein uS2 (332 aa).

It belongs to the universal ribosomal protein uS2 family.

The polypeptide is Small ribosomal subunit protein uS2 (Afipia carboxidovorans (strain ATCC 49405 / DSM 1227 / KCTC 32145 / OM5) (Oligotropha carboxidovorans)).